The primary structure comprises 346 residues: DNA repair protein XRCC3 (346 aa).

Methionine 1 is modified (N-acetylmethionine). 107-114 (GRSSAGKT) provides a ligand contact to ATP.

The protein belongs to the RecA family. RAD51 subfamily. In terms of assembly, interacts with RAD51C and RAD51. Part of the CX3 complex consisting of RAD51C and XRCC3; the complex has a ring-like structure arranged into a flat disk around a central channel; CX3 can interact with RAD51 in vitro. Forms a complex with FANCD2, BRCA2 and phosphorylated FANCG. Interacts with SWSAP1 and ZSWIM7; involved in homologous recombination repair. Interacts directly with PALB2 which may serve as a scaffold for a HR complex containing PALB2, BRCA2, RAD51C, RAD51 and XRCC3.

The protein resides in the nucleus. It localises to the cytoplasm. The protein localises to the perinuclear region. Its subcellular location is the mitochondrion. In terms of biological role, involved in the homologous recombination repair (HRR) pathway of double-stranded DNA, thought to repair chromosomal fragmentation, translocations and deletions. Part of the RAD51 paralog protein complex CX3 which acts in the BRCA1-BRCA2-dependent HR pathway. Upon DNA damage, CX3 acts downstream of RAD51 recruitment; the complex binds predominantly to the intersection of the four duplex arms of the Holliday junction (HJ) and to junctions of replication forks. Involved in HJ resolution and thus in processing HR intermediates late in the DNA repair process; the function may be linked to the CX3 complex and seems to involve GEN1 during mitotic cell cycle progression. Part of a PALB2-scaffolded HR complex containing BRCA2 and RAD51C and which is thought to play a role in DNA repair by HR. Plays a role in regulating mitochondrial DNA copy number under conditions of oxidative stress in the presence of RAD51 and RAD51C. The polypeptide is DNA repair protein XRCC3 (XRCC3) (Homo sapiens (Human)).